The chain runs to 160 residues: Vegetative-specific protein V4 (160 aa).

3 repeat units span residues 151-153, 154-156, and 157-159. A 3 X 3 AA tandem repeats of N-Q-[PG] region spans residues 151–159; that stretch reads NQPNQPNQG.

Functionally, unknown. Its expression during growth is not required for growth but for the proper initiation of development, therefore playing a role in the transition from growth to development. This chain is Vegetative-specific protein V4 (lmcB), found in Dictyostelium discoideum (Social amoeba).